The following is a 412-amino-acid chain: Serine hydroxymethyltransferase (412 aa).

(6S)-5,6,7,8-tetrahydrofolate-binding positions include leucine 114 and 118–120 (GHL). The residue at position 223 (lysine 223) is an N6-(pyridoxal phosphate)lysine.

Belongs to the SHMT family. In terms of assembly, homodimer. Pyridoxal 5'-phosphate is required as a cofactor.

The protein localises to the cytoplasm. The catalysed reaction is (6R)-5,10-methylene-5,6,7,8-tetrahydrofolate + glycine + H2O = (6S)-5,6,7,8-tetrahydrofolate + L-serine. Its pathway is one-carbon metabolism; tetrahydrofolate interconversion. It participates in amino-acid biosynthesis; glycine biosynthesis; glycine from L-serine: step 1/1. Its function is as follows. Catalyzes the reversible interconversion of serine and glycine with tetrahydrofolate (THF) serving as the one-carbon carrier. This reaction serves as the major source of one-carbon groups required for the biosynthesis of purines, thymidylate, methionine, and other important biomolecules. Also exhibits THF-independent aldolase activity toward beta-hydroxyamino acids, producing glycine and aldehydes, via a retro-aldol mechanism. This chain is Serine hydroxymethyltransferase, found in Mesoplasma florum (strain ATCC 33453 / NBRC 100688 / NCTC 11704 / L1) (Acholeplasma florum).